Here is a 166-residue protein sequence, read N- to C-terminus: Stress response protein NhaX (166 aa).

It belongs to the universal stress protein A family.

The chain is Stress response protein NhaX (nhaX) from Bacillus subtilis (strain 168).